The sequence spans 158 residues: Cyclic pyranopterin monophosphate synthase (158 aa).

Substrate contacts are provided by residues 76 to 78 (LCH) and 114 to 115 (ME). D129 is a catalytic residue.

Belongs to the MoaC family. In terms of assembly, homohexamer; trimer of dimers.

The enzyme catalyses (8S)-3',8-cyclo-7,8-dihydroguanosine 5'-triphosphate = cyclic pyranopterin phosphate + diphosphate. It participates in cofactor biosynthesis; molybdopterin biosynthesis. Functionally, catalyzes the conversion of (8S)-3',8-cyclo-7,8-dihydroguanosine 5'-triphosphate to cyclic pyranopterin monophosphate (cPMP). The polypeptide is Cyclic pyranopterin monophosphate synthase (Shewanella halifaxensis (strain HAW-EB4)).